The following is a 62-amino-acid chain: Sperm protamine P1 (62 aa).

Positions 1–62 (MARYRRHSRS…RYSRRGRRRY (62 aa)) are disordered.

It belongs to the protamine P1 family. Testis.

Its subcellular location is the nucleus. The protein resides in the chromosome. Functionally, protamines substitute for histones in the chromatin of sperm during the haploid phase of spermatogenesis. They compact sperm DNA into a highly condensed, stable and inactive complex. This chain is Sperm protamine P1 (PRM1), found in Antechinomys laniger (Eastern jerboa marsupial).